The chain runs to 117 residues: UPF0122 protein Teth39_1278 (117 aa).

Belongs to the UPF0122 family.

Might take part in the signal recognition particle (SRP) pathway. This is inferred from the conservation of its genetic proximity to ftsY/ffh. May be a regulatory protein. The polypeptide is UPF0122 protein Teth39_1278 (Thermoanaerobacter pseudethanolicus (strain ATCC 33223 / 39E) (Clostridium thermohydrosulfuricum)).